The primary structure comprises 115 residues: Viral Lymphotactin (115 aa).

Residues 1–19 (MRLLTILALCCVAIWVVES) form the signal peptide. Cys-30 and Cys-67 form a disulfide bridge.

This sequence belongs to the intercrine gamma family. In terms of assembly, interacts with host XCR1. Post-translationally, N-glycosylated and O-glycosylated.

The protein localises to the secreted. Functionally, chemoattractant for CD4-dendritic cells, but not for CD4+ dendritic cells, T-cells or B-cells. This chain is Viral Lymphotactin (vXCL1), found in Rat cytomegalovirus (isolate England) (RCMV-E).